The sequence spans 156 residues: ATP synthase subunit b (156 aa).

Residues 5-25 (VTLIGQTVAFIIFVWFCMKFV) form a helical membrane-spanning segment.

This sequence belongs to the ATPase B chain family. As to quaternary structure, F-type ATPases have 2 components, F(1) - the catalytic core - and F(0) - the membrane proton channel. F(1) has five subunits: alpha(3), beta(3), gamma(1), delta(1), epsilon(1). F(0) has three main subunits: a(1), b(2) and c(10-14). The alpha and beta chains form an alternating ring which encloses part of the gamma chain. F(1) is attached to F(0) by a central stalk formed by the gamma and epsilon chains, while a peripheral stalk is formed by the delta and b chains.

The protein localises to the cell inner membrane. Functionally, f(1)F(0) ATP synthase produces ATP from ADP in the presence of a proton or sodium gradient. F-type ATPases consist of two structural domains, F(1) containing the extramembraneous catalytic core and F(0) containing the membrane proton channel, linked together by a central stalk and a peripheral stalk. During catalysis, ATP synthesis in the catalytic domain of F(1) is coupled via a rotary mechanism of the central stalk subunits to proton translocation. Its function is as follows. Component of the F(0) channel, it forms part of the peripheral stalk, linking F(1) to F(0). The protein is ATP synthase subunit b of Shewanella loihica (strain ATCC BAA-1088 / PV-4).